We begin with the raw amino-acid sequence, 33 residues long: Brevinin-2HSa (33 aa).

Cys-27 and Cys-33 form a disulfide bridge.

As to expression, expressed by the skin glands.

The protein resides in the secreted. In terms of biological role, has antibacterial activity against the Gram-positive bacterium S.aureus ATCC 25923 (MIC=18 uM) and the Gram-negative bacterium E.coli ATCC 25726 (MIC=36 uM). The protein is Brevinin-2HSa of Odorrana hosii (Hose's rock frog).